Reading from the N-terminus, the 300-residue chain is Quinolinate synthase (300 aa).

The iminosuccinate site is built by His-23 and Ser-40. Cys-85 lines the [4Fe-4S] cluster pocket. Iminosuccinate is bound by residues 111-113 (YIN) and Ser-128. Position 171 (Cys-171) interacts with [4Fe-4S] cluster. Iminosuccinate is bound by residues 198–200 (HPE) and Thr-215. [4Fe-4S] cluster is bound at residue Cys-258.

Belongs to the quinolinate synthase family. Type 2 subfamily. [4Fe-4S] cluster is required as a cofactor.

Its subcellular location is the cytoplasm. The catalysed reaction is iminosuccinate + dihydroxyacetone phosphate = quinolinate + phosphate + 2 H2O + H(+). The protein operates within cofactor biosynthesis; NAD(+) biosynthesis; quinolinate from iminoaspartate: step 1/1. Its function is as follows. Catalyzes the condensation of iminoaspartate with dihydroxyacetone phosphate to form quinolinate. This is Quinolinate synthase from Clostridium novyi (strain NT).